The sequence spans 147 residues: Large ribosomal subunit protein uL16 (147 aa).

Belongs to the universal ribosomal protein uL16 family. In terms of assembly, part of the 50S ribosomal subunit.

Functionally, binds 23S rRNA and is also seen to make contacts with the A and possibly P site tRNAs. This is Large ribosomal subunit protein uL16 from Finegoldia magna (strain ATCC 29328 / DSM 20472 / WAL 2508) (Peptostreptococcus magnus).